The primary structure comprises 176 residues: Pituitary adenylate cyclase-activating polypeptide (176 aa).

The first 24 residues, 1-24, serve as a signal peptide directing secretion; that stretch reads MTMCSGARLALLVYGIIMHSSVYS. Residues 25-79 constitute a propeptide that is removed on maturation; that stretch reads SPAAAGLRFPGIRPEEEAYGEDGNPLPDFDGSEPPGAGSPASAPRAAAAWYRPAG. Residues 39 to 68 are disordered; sequence EEEAYGEDGNPLPDFDGSEPPGAGSPASAP. Over residues 56-68 the composition is skewed to low complexity; it reads SEPPGAGSPASAP. Residues 150–158 are important for receptor binding; sequence VKKYLAAVL. L158 bears the Leucine amide mark. K169 carries the lysine amide modification. Residues 173–176 constitute a propeptide that is removed on maturation; it reads IAYL.

This sequence belongs to the glucagon family.

The protein localises to the secreted. Functionally, PACAP is a neuropeptide involved in diverse array of physiological processes through activating the PACAP subfamily of class B1 G protein-coupled receptors: VIP receptor 1 (VIPR1), VIP receptor 2 (VIPR2), and PACAP type I receptor (ADCYAP1R1). Exerts neuroprotective and general cytoprotective effects due to anti-apoptotic, anti-inflammatory, and antioxidant actions. Promotes neuron projection development through the RAPGEF2/Rap1/B-Raf/ERK pathway. In chromaffin cells, induces long-lasting increase of intracellular calcium concentrations and neuroendocrine secretion. Involved in the control of glucose homeostasis, induces insulin secretion by pancreatic beta cells. PACAP exists in two bioactive forms from proteolysis of the same precursor protein, PACAP27 and PACAP38, which differ by eleven amino acid residues in the C-terminus. The polypeptide is Pituitary adenylate cyclase-activating polypeptide (Homo sapiens (Human)).